Here is a 163-residue protein sequence, read N- to C-terminus: NADH-quinone oxidoreductase subunit 9 (163 aa).

4Fe-4S ferredoxin-type domains are found at residues 54–84 (LRRYPNGEERCIACKLCEAVCPAQAITIDAE) and 94–123 (TRYDIDMTKCIYCGFCQEACPVDAIVEGPN). [4Fe-4S] cluster contacts are provided by Cys-64, Cys-67, Cys-70, Cys-74, Cys-103, Cys-106, Cys-109, and Cys-113.

It belongs to the complex I 23 kDa subunit family. NDH-1 is composed of at least 14 different subunits, Nqo1 to Nqo14. The complex has a L-shaped structure, with the hydrophobic arm (subunits Nqo7, Nqo8, Nqo10 to Nqo14) embedded in the inner membrane and the hydrophilic peripheral arm (subunits Nqo1 to Nqo6, Nqo9) protruding into the bacterial cytoplasm. The hydrophilic domain contains all the redox centers. The cofactor is [4Fe-4S] cluster.

The protein resides in the cell inner membrane. The catalysed reaction is a quinone + NADH + 5 H(+)(in) = a quinol + NAD(+) + 4 H(+)(out). Its function is as follows. NDH-1 shuttles electrons from NADH, via FMN and iron-sulfur (Fe-S) centers, to quinones in the respiratory chain. The immediate electron acceptor for the enzyme in this species is believed to be ubiquinone. Couples the redox reaction to proton translocation (for every two electrons transferred, four hydrogen ions are translocated across the cytoplasmic membrane), and thus conserves the redox energy in a proton gradient. The sequence is that of NADH-quinone oxidoreductase subunit 9 from Paracoccus denitrificans.